A 318-amino-acid polypeptide reads, in one-letter code: MPKRGKKGAVAEDGDELKTEPEAKKSKTTAKKNDKEAAGEGPALYEDPPDQKTSPSGKPATLKICSWNVDGLRAWIKKKGLDWVKEEAPDILCLQETKCSENKLPAELQELPGLSHQYWSAPSDKEGYSGVGLLSRQCPLKVSYGIGEEEHDQEGRVIVAEFDSFVLVTAYVPNAGRGLVRLEYRQRWDEAFRRFLKGLASRKPLVLCGDLNVAHEEIDLRNPKGNKKNAGFTPQERQGFGELLQAVPLADSFRHLYPNTPYAYTFWTYMMNARSKNVGWRLDYFLLSHSLLTALCDSKIRSKALGSDHCPITLYLAL.

The segment at 1–33 (MPKRGKKGAVAEDGDELKTEPEAKKSKTTAKKN) is necessary for interaction with YBX1, binding to RNA, association together with NPM1 to rRNA, endoribonuclease activity on abasic RNA and localization in the nucleoli. Positions 1–60 (MPKRGKKGAVAEDGDELKTEPEAKKSKTTAKKNDKEAAGEGPALYEDPPDQKTSPSGKPA) are disordered. Residues Lys-6 and Lys-7 each carry the N6-acetyllysine; by EP300 modification. Positions 8 to 13 (GAVAED) match the Nuclear localization signal (NLS) motif. A compositionally biased stretch (basic and acidic residues) spans 16–38 (ELKTEPEAKKSKTTAKKNDKEAA). Residues 23–33 (AKKSKTTAKKN) are necessary for interaction with NPM1 and for efficient rRNA binding. N6-acetyllysine occurs at positions 27, 31, 32, and 35. Position 54 is a phosphoserine (Ser-54). A Nuclear export signal (NES) motif is present at residues 64-80 (ICSWNVDGLRAWIKKKG). Cys-65 carries the post-translational modification S-nitrosocysteine; alternate. A disulfide bridge links Cys-65 with Cys-93. Asp-70 lines the Mg(2+) pocket. S-nitrosocysteine; alternate is present on Cys-93. Residue Glu-96 participates in Mg(2+) binding. The active site involves Tyr-171. The residue at position 197 (Lys-197) is an N6-acetyllysine. Residues Asp-210 and Asn-212 each coordinate Mg(2+). The active-site Proton donor/acceptor is Asp-210. Thr-233 is subject to Phosphothreonine; by CDK5. Residues 289–318 (HSLLTALCDSKIRSKALGSDHCPITLYLAL) are mitochondrial targeting sequence (MTS). Asp-308 is a binding site for Mg(2+). Cys-310 bears the S-nitrosocysteine mark.

This sequence belongs to the DNA repair enzymes AP/ExoA family. In terms of assembly, monomer. Homodimer; disulfide-linked. Component of the SET complex, composed of at least APEX1, SET, ANP32A, HMGB2, NME1 and TREX1. Associates with the dimer XRCC5/XRCC6 in a DNA-dependent manner. Interacts with SIRT1; the interaction is increased in the context of genotoxic stress. Interacts with HDAC1, HDAC2 and HDAC3; the interactions are not dependent on the APEX1 acetylation status. Interacts with XRCC1; the interaction is induced by SIRT1 and increased with the APEX1 acetylated form. Interacts with NPM1 (via N-terminal domain); the interaction is RNA-dependent and decreases in hydrogen peroxide-damaged cells. Interacts (via N-terminus) with YBX1 (via C-terminus); the interaction is increased in presence of APEX1 acetylated at Lys-6 and Lys-7. Interacts with HNRNPL; the interaction is DNA-dependent. Interacts (via N-terminus) with KPNA1 and KPNA2. Interacts with TXN; the interaction stimulates the FOS/JUN AP-1 complex DNA-binding activity in a redox-dependent manner. Interacts with GZMA, KRT8, MDM2, POLB, PRDX6, PRPF19, RPLP0, TOMM20 and WDR77. Binds to CDK5. Mg(2+) serves as cofactor. It depends on Mn(2+) as a cofactor. In terms of processing, phosphorylated. Phosphorylation by kinase PKC or casein kinase CK2 results in enhanced redox activity that stimulates binding of the FOS/JUN AP-1 complex to its cognate binding site. AP-endodeoxyribonuclease activity is not affected by CK2-mediated phosphorylation. Phosphorylation of Thr-233 by CDK5 in response to MPP(+)/MPTP (1-methyl-4-phenylpyridinium) reduces AP-endodeoxyribonuclease activity resulting in accumulation of DNA damage and contributing to neuronal death. Acetylated on Lys-6 and Lys-7. Acetylation is increased by the transcriptional coactivator EP300 acetyltransferase, genotoxic agents like H(2)O(2) and methyl methanesulfonate (MMS). Acetylation increases its binding affinity to the negative calcium response element (nCaRE) DNA promoter. The acetylated form induces a stronger binding of YBX1 to the Y-box sequence in the MDR1 promoter than the unacetylated form. Deacetylated on lysines. Lys-6 and Lys-7 are deacetylated by SIRT1. Post-translationally, cleaved at Lys-31 by granzyme A to create the mitochondrial form; leading in reduction of binding to DNA, AP endodeoxyribonuclease activity, redox activation of transcription factors and to enhanced cell death. Cleaved by granzyme K; leading to intracellular ROS accumulation and enhanced cell death after oxidative stress. In terms of processing, cys-69 and Cys-93 are nitrosylated in response to nitric oxide (NO) and lead to the exposure of the nuclear export signal (NES). Ubiquitinated by MDM2; leading to translocation to the cytoplasm and proteasomal degradation.

The protein localises to the nucleus. The protein resides in the nucleolus. It localises to the nucleus speckle. Its subcellular location is the endoplasmic reticulum. It is found in the cytoplasm. The protein localises to the mitochondrion. The enzyme catalyses a deoxyribonucleotide-2'-deoxyribose-5'-monophosphate-DNA + H2O = a 5'-end 2'-deoxyribose-5'-monophosphate-DNA + a 3'-end 2'-deoxyribonucleotide-DNA + H(+). The catalysed reaction is Exonucleolytic cleavage in the 3'- to 5'-direction to yield nucleoside 5'-phosphates.. It catalyses the reaction a 3'-end 2'-deoxyribonucleotide-3'-phosphoglycolate-DNA + H2O = 2-phosphoglycolate + a 3'-end 2'-deoxyribonucleotide-DNA + H(+). It carries out the reaction a 3'-end 2'-deoxyribonucleotide-8-oxoguanine-DNA + H2O = 8-oxo-dGMP + a 3'-end 2'-deoxyribonucleotide-DNA + H(+). NPM1 stimulates endodeoxyribonuclease activity on double-stranded DNA with AP sites, but inhibits endoribonuclease activity on single-stranded RNA containing AP sites. Multifunctional protein that plays a central role in the cellular response to oxidative stress. The two major activities of APEX1 are DNA repair and redox regulation of transcriptional factors. Functions as an apurinic/apyrimidinic (AP) endodeoxyribonuclease in the base excision repair (BER) pathway of DNA lesions induced by oxidative and alkylating agents. Initiates repair of AP sites in DNA by catalyzing hydrolytic incision of the phosphodiester backbone immediately adjacent to the damage, generating a single-strand break with 5'-deoxyribose phosphate and 3'-hydroxyl ends. Also incises at AP sites in the DNA strand of DNA/RNA hybrids, single-stranded DNA regions of R-loop structures, and single-stranded RNA molecules. Operates at switch sites of immunoglobulin (Ig) constant regions where it mediates Ig isotype class switch recombination. Processes AP sites induced by successive action of AICDA and UNG. Generates staggered nicks in opposite DNA strands resulting in the formation of double-strand DNA breaks that are finally resolved via non-homologous end joining repair pathway. Has 3'-5' exodeoxyribonuclease activity on mismatched deoxyribonucleotides at the 3' termini of nicked or gapped DNA molecules during short-patch BER. Possesses DNA 3' phosphodiesterase activity capable of removing lesions (such as phosphoglycolate and 8-oxoguanine) blocking the 3' side of DNA strand breaks. Also acts as an endoribonuclease involved in the control of single-stranded RNA metabolism. Plays a role in regulating MYC mRNA turnover by preferentially cleaving in between UA and CA dinucleotides of the MYC coding region determinant (CRD). In association with NMD1, plays a role in the rRNA quality control process during cell cycle progression. Acts as a loading factor for POLB onto non-incised AP sites in DNA and stimulates the 5'-terminal deoxyribose 5'-phosphate (dRp) excision activity of POLB. Exerts reversible nuclear redox activity to regulate DNA binding affinity and transcriptional activity of transcriptional factors by controlling the redox status of their DNA-binding domain, such as the FOS/JUN AP-1 complex after exposure to IR. Involved in calcium-dependent down-regulation of parathyroid hormone (PTH) expression by binding to negative calcium response elements (nCaREs). Together with HNRNPL or the dimer XRCC5/XRCC6, associates with nCaRE, acting as an activator of transcriptional repression. May also play a role in the epigenetic regulation of gene expression by participating in DNA demethylation. Stimulates the YBX1-mediated MDR1 promoter activity, when acetylated at Lys-6 and Lys-7, leading to drug resistance. Plays a role in protection from granzyme-mediated cellular repair leading to cell death. Binds DNA and RNA. Associates, together with YBX1, on the MDR1 promoter. Together with NPM1, associates with rRNA. In Pongo pygmaeus (Bornean orangutan), this protein is DNA repair nuclease/redox regulator APEX1 (APEX1).